A 319-amino-acid chain; its full sequence is Solute carrier family 25 member 34 (319 aa).

The tract at residues 1 to 22 (MNSAFSGPSSPTPGPSPPRPPL) is disordered. Positions 10–22 (SPTPGPSPPRPPL) are enriched in pro residues. Solcar repeat units follow at residues 22–115 (LWPP…MQAA), 119–212 (DGPC…AKDW), and 222–313 (LSSL…LRQR). 6 helical membrane-spanning segments follow: residues 25–45 (PLDFGLGALACCGACVFTNPL), 63–83 (SYRRLYRGVLQALWVVGRTDG), 116–138 (GVTDGPCCSLIAGAAAGALGAFI), 188–209 (VNGAVPRVMVGSATQLATFSSA), 224–244 (SLNTLCAAVMSGVAVSIIMTP), and 296–319 (LAPHTTLSMLLWDVLRQRALPYTH).

The protein belongs to the mitochondrial carrier (TC 2.A.29) family.

The protein resides in the mitochondrion inner membrane. This Danio rerio (Zebrafish) protein is Solute carrier family 25 member 34 (slc25a34).